The chain runs to 282 residues: U1 small nuclear ribonucleoprotein A (282 aa).

Alanine 2 is subject to N-acetylalanine. One can recognise an RRM 1 domain in the interval 10–89; sequence HTIYINNLNE…KPMRIQYAKT (80 aa). The residue at position 60 (lysine 60) is an N6-acetyllysine. Residues 101–141 form a disordered region; sequence FVERDRKREKRKPKSQETPAAKKAVQGGAAAPVVGTVQGPV. Residues 119–141 show a composition bias toward low complexity; it reads PAAKKAVQGGAAAPVVGTVQGPV. Arginine 152 carries the post-translational modification Omega-N-methylarginine. The RRM 2 domain maps to 208–282; that stretch reads HILFLTNLPE…NAMKISFAKK (75 aa).

The protein belongs to the RRM U1 A/B'' family. In terms of assembly, U1 snRNP is composed of the 7 core Sm proteins SNRPB, SNRPD1, SNRPD2, SNRPD3, SNRPE, SNRPF and SNRPG that assemble in a heptameric protein ring on the Sm site of the small nuclear RNA to form the core snRNP, and at least three U1 snRNP-specific proteins SNRNP70/U1-70K, SNRPA/U1-A and SNRPC/U1-C. Interacts with SFPQ; component of a snRNP-free complex with SFPQ.

The protein localises to the nucleus. Its function is as follows. Component of the spliceosomal U1 snRNP, which is essential for recognition of the pre-mRNA 5' splice-site and the subsequent assembly of the spliceosome. U1 snRNP is the first snRNP to interact with pre-mRNA. This interaction is required for the subsequent binding of U2 snRNP and the U4/U6/U5 tri-snRNP. SNRPA binds stem loop II of U1 snRNA. In a snRNP-free form (SF-A) may be involved in coupled pre-mRNA splicing and polyadenylation process. May bind preferentially to the 5'-UGCAC-3' motif on RNAs. The chain is U1 small nuclear ribonucleoprotein A (SNRPA) from Bos taurus (Bovine).